Reading from the N-terminus, the 137-residue chain is Sch210972 biosynthesis cluster protein E (137 aa).

The span at Met1–Pro12 shows a compositional bias: polar residues. Positions Met1 to Gly137 are disordered. Residues Pro15 to Thr27 show a composition bias toward low complexity. The span at Gly51–Arg71 shows a compositional bias: polar residues. The span at Asp94–Lys109 shows a compositional bias: basic and acidic residues.

Its pathway is secondary metabolite biosynthesis. Functionally, part of the gene cluster that mediates the biosynthesis of the tetramic acid Sch210972, a potential anti-HIV fungal natural product that contains a decalin core. The PKS module of cghG together with the enoylreductase cghC catalyze the formation of the polyketide unit which is then conjugated to 4-hydroxyl-4-methyl glutamate (HMG) by the condensation domain of the cghG NRPS module. One unique structural feature of Sch210972 is the tetramic acid motif proposed to be derived from the non-proteinogenic amino acid HMG, by a Dieckmann-type condensation catalyzed by the reductase domain of cghG. The aldolase cghB catalyzes the aldol condensation of 2 molecules of pyruvic acid to yield the intermediate 4-hydroxyl-4-methyl-2-oxoglutarate (HMOG), which can then be stereoselectively transaminated by an unidentified enzyme to form HMG. The Diels-Alderase cghA then uses the Dieckmann product released by cghG as substrate and catalyzes the Diels-Alder cycloaddition to form the decalin ring of Sch210972. CghA also suppresses the nonenzymatic formation of the alternative stereoisomer. In Chaetomium globosum (strain ATCC 6205 / CBS 148.51 / DSM 1962 / NBRC 6347 / NRRL 1970) (Soil fungus), this protein is Sch210972 biosynthesis cluster protein E.